The following is a 560-amino-acid chain: Solute carrier family 49 member A3 (560 aa).

A run of 12 helical transmembrane segments spans residues 30–50 (WVFL…WLSF), 70–90 (WLSL…IWIL), 100–120 (ILGA…CMVV), 125–145 (PFAF…LVIF), 166–186 (LATM…PVLV), 192–212 (IPLM…LSTI), 250–270 (VILA…SALL), 282–302 (GFSG…ALAL), 318–338 (IGLC…QLQG), 341–361 (LALA…GPVA), 379–399 (GMIF…MTAL), and 422–442 (VSLL…AVFF). The segment at 451 to 540 (AESGEPPSTR…PGRLAGRVQA (90 aa)) is disordered. Residues 466-481 (ADSGPGVDRGGAGRAG) show a composition bias toward gly residues.

This sequence belongs to the major facilitator superfamily.

It localises to the membrane. The sequence is that of Solute carrier family 49 member A3 from Homo sapiens (Human).